Reading from the N-terminus, the 503-residue chain is MKKARMTVDKDYKIAEIDKRIYGSFVEHLGRAVYDGLYQPGNSKSDEDGFRKDVIELVKELNVPIIRYPGGNFVSNYFWEDGVGPVEDRPRRLDLAWKSIEPNQVGINEFAKWCKKVNAEIMMAVNLGTRGISDACNLLEYCNHPGGSKYSDMRIKHGVKEPHNIKVWCLGNEMDGPWQVGHKTMDEYGRIAEETARAMKMIDPSIELVACGSSSKDMPTFPQWEATVLDYAYDYVDYISLHQYYGNKENDTADFLAKSDDLDDFIRSVIATCDYIKAKKRSKKDIYLSFDEWNVWYHSNNEDANIMQNEPWRIAPPLLEDIYTFEDALLVGLMLITLMKHADRIKIACLAQLINVIAPIVTERNGGAAWRQTIFYPFMHASKYGRGIVLQPVINSPLHDTSKHEDVTDIESVAIYNEEKEEVTIFAVNRNIHEDIVLVSDVRGMKDYRLLEHIVLEHQDLKIRNSVNGEEVYPKNSDKSSFDDGILTSMLRRASWNVIRIGK.

Residues Glu-27, Asn-72, and Asn-172 each coordinate alpha-L-arabinofuranose. The Proton donor/acceptor role is filled by Glu-173. Alpha-L-arabinofuranose contacts are provided by Tyr-244, Glu-292, and Gln-352. The active-site Nucleophile is Glu-292.

The protein belongs to the glycosyl hydrolase 51 family. In terms of assembly, homohexamer; trimer of dimers.

The protein resides in the cytoplasm. It carries out the reaction Hydrolysis of terminal non-reducing alpha-L-arabinofuranoside residues in alpha-L-arabinosides.. Its pathway is glycan metabolism; L-arabinan degradation. Its function is as follows. Involved in the degradation of arabinan and is a key enzyme in the complete degradation of the plant cell wall. Catalyzes the cleavage of terminal alpha-(1-&gt;5)-arabinofuranosyl bonds in small oligosaccharides as alpha-(1-&gt;5)-linked arabinobiose/arabinotriose, but does not display significant activity against linear non-substituted arabinan. It is also highly efficient in the cleavage of alpha-(1-&gt;3)-linked arabinoside of xylobiose and of the alpha-(1-&gt;3)-linked arabinoside decorations of polymeric wheat arabinoxylan. It exhibits very low activity against sugar beet arabinan. This Acetivibrio thermocellus (strain ATCC 27405 / DSM 1237 / JCM 9322 / NBRC 103400 / NCIMB 10682 / NRRL B-4536 / VPI 7372) (Clostridium thermocellum) protein is Intracellular exo-alpha-(1-&gt;5)-L-arabinofuranosidase.